Here is a 118-residue protein sequence, read N- to C-terminus: NADH-quinone oxidoreductase subunit A (118 aa).

3 consecutive transmembrane segments (helical) span residues 5–25 (YLGI…AFAV), 61–81 (FLYA…YPWA), and 90–110 (FAIV…WYAW).

Belongs to the complex I subunit 3 family. In terms of assembly, NDH-1 is composed of 14 different subunits. Subunits NuoA, H, J, K, L, M, N constitute the membrane sector of the complex.

The protein localises to the cell membrane. The catalysed reaction is a quinone + NADH + 5 H(+)(in) = a quinol + NAD(+) + 4 H(+)(out). Its function is as follows. NDH-1 shuttles electrons from NADH, via FMN and iron-sulfur (Fe-S) centers, to quinones in the respiratory chain. The immediate electron acceptor for the enzyme in this species is believed to be a menaquinone. Couples the redox reaction to proton translocation (for every two electrons transferred, four hydrogen ions are translocated across the cytoplasmic membrane), and thus conserves the redox energy in a proton gradient. The sequence is that of NADH-quinone oxidoreductase subunit A from Heliobacterium modesticaldum (strain ATCC 51547 / Ice1).